The sequence spans 348 residues: sn-glycerol-3-phosphate import ATP-binding protein UgpC 3 (348 aa).

The region spanning 4-234 (INIIDVKKNY…PASLFVASFI (231 aa)) is the ABC transporter domain. 36 to 43 (GPSGCGKS) contributes to the ATP binding site.

It belongs to the ABC transporter superfamily. sn-glycerol-3-phosphate importer (TC 3.A.1.1.3) family. The complex is composed of two ATP-binding proteins (UgpC), two transmembrane proteins (UgpA and UgpE) and a solute-binding protein (UgpB).

It is found in the cell inner membrane. It catalyses the reaction sn-glycerol 3-phosphate(out) + ATP + H2O = sn-glycerol 3-phosphate(in) + ADP + phosphate + H(+). In terms of biological role, part of the ABC transporter complex UgpBAEC involved in sn-glycerol-3-phosphate (G3P) import. Responsible for energy coupling to the transport system. In Rhizobium johnstonii (strain DSM 114642 / LMG 32736 / 3841) (Rhizobium leguminosarum bv. viciae), this protein is sn-glycerol-3-phosphate import ATP-binding protein UgpC 3.